Reading from the N-terminus, the 178-residue chain is Endothelin-2 (178 aa).

Residues 1–26 (MVAMPTAWCSIALALLLALHEGKGQV) form the signal peptide. A propeptide spanning residues 27–46 (AAAPDQPAPSHRARASHLRP) is cleaved from the precursor. Cystine bridges form between Cys49/Cys63 and Cys51/Cys59. Residues 70–178 (VNTPGQTAPY…RPTHSRRWKR (109 aa)) constitute a propeptide that is removed on maturation. Residues 96-111 (CECSSGRDPACATFCH) form an endothelin-like region.

Belongs to the endothelin/sarafotoxin family.

The protein resides in the secreted. Functionally, endothelins are endothelium-derived vasoconstrictor peptides. In Felis catus (Cat), this protein is Endothelin-2 (EDN2).